The primary structure comprises 447 residues: Argininosuccinate synthase (447 aa).

ATP contacts are provided by residues 17 to 25 (AFSGGLDTS) and Ala-43. An L-citrulline-binding site is contributed by Tyr-99. ATP is bound by residues Gly-129 and Thr-131. Thr-131, Asn-135, and Asp-136 together coordinate L-aspartate. Asn-135 is an L-citrulline binding site. An ATP-binding site is contributed by Asp-136. Residues Arg-139 and Ser-192 each contribute to the L-citrulline site. Asp-194 serves as a coordination point for ATP. Positions 201, 203, and 280 each coordinate L-citrulline.

The protein belongs to the argininosuccinate synthase family. Type 2 subfamily. In terms of assembly, homotetramer.

The protein resides in the cytoplasm. It carries out the reaction L-citrulline + L-aspartate + ATP = 2-(N(omega)-L-arginino)succinate + AMP + diphosphate + H(+). It functions in the pathway amino-acid biosynthesis; L-arginine biosynthesis; L-arginine from L-ornithine and carbamoyl phosphate: step 2/3. This Salmonella dublin (strain CT_02021853) protein is Argininosuccinate synthase.